The primary structure comprises 853 residues: Neural cell adhesion molecule 1 (853 aa).

The first 19 residues, 1 to 19, serve as a signal peptide directing secretion; that stretch reads MLQTKNLIWTLFFLGTAVS. 5 Ig-like C2-type domains span residues 20–111, 116–205, 212–300, 307–412, and 415–500; these read LQVD…ATVN, QKLM…KDIQ, PTVQ…ASIH, PKIT…LEVQ, and PKLQ…ESLE. Residues 20 to 719 lie on the Extracellular side of the membrane; that stretch reads LQVDIVPSQG…NGSPTSGLST (700 aa). 2 cysteine pairs are disulfide-bonded: Cys-41-Cys-96 and Cys-139-Cys-189. Heparin is bound by residues 152-156 and 161-165; these read KHKGR and KKDVR. An N-linked (GlcNAc...) asparagine glycan is attached at Asn-222. An intrachain disulfide couples Cys-235 to Cys-286. N-linked (GlcNAc...) asparagine glycosylation is found at Asn-314, Asn-346, Asn-432, Asn-458, and Asn-487. Cys-328 and Cys-394 are joined by a disulfide. Residues Cys-435 and Cys-488 are joined by a disulfide bond. Fibronectin type-III domains lie at 508–607 and 609–704; these read TPSS…TQPV and EPSA…SAQP. The chain crosses the membrane as a helical span at residues 720–737; the sequence is GAIVGILVVTFVLLLVAV. The Cytoplasmic segment spans residues 738–853; that stretch reads DVTCYFLNKC…TQIKVNESKA (116 aa). A disordered region spans residues 764–853; sequence GAKGKDMEEG…TQIKVNESKA (90 aa). Composition is skewed to basic and acidic residues over residues 766–807 and 815–829; these read KGKD…HTEP and EPEK…ETET. Phosphoserine occurs at positions 778 and 782. Residues 838–853 show a composition bias toward polar residues; it reads TVPNDATQIKVNESKA.

In terms of assembly, interacts with MDK. Found in a complex with SLC39A6, SLC39A10 and with NCAM1; this complex controls NCAM1 phosphorylation and integration into focal adhesion complexes during epithelial-tomesenchymal transition. Interacts with synaptic plasticity regulator PANTS. Polysialylated by ST8SIA2 and ST8SIA4. Polysialylation modulates cell interactions by confering both attractive and repulsive properties that are highly regulated by ST8SIA2 and ST8SIA4. Polysialylation is formed on a-2,3-linked sialic acid of core glycans.

The protein localises to the cell membrane. Functionally, this protein is a cell adhesion molecule involved in neuron-neuron adhesion, neurite fasciculation, outgrowth of neurites, etc. This chain is Neural cell adhesion molecule 1, found in Bos taurus (Bovine).